The chain runs to 639 residues: Methyl-accepting chemotaxis protein McpS (639 aa).

At 1–13 (MNSWFANISVNLK) the chain is on the cytoplasmic side. The chain crosses the membrane as a helical span at residues 14-34 (LGLGFGLVLVLTGLLALTGWT). At 35-288 (SLGSLIDRSN…RDIESTQARS (254 aa)) the chain is on the periplasmic side. Positions 41–283 (DRSNWMGDIG…IQLERRDIES (243 aa)) constitute an HBM domain. 60-65 (RIARLQ) serves as a coordination point for (S)-malate. 60–65 (RIARLQ) provides a ligand contact to succinate. Positions 138, 183, 187, and 236 each coordinate acetate. Residues 191–245 (AENSSANEQAALRQLDAALADTDNLKRQLPSEDARLQQFENAVLAYRDAVRQFRD) are a coiled coil. 2 residues coordinate (S)-malate: arginine 254 and threonine 258. Succinate is bound at residue arginine 254. A helical membrane pass occupies residues 289–309 (LQAIATLLALLVGVLAAVLIT). The 53-residue stretch at 310–362 (RQITRPLQDTLVAVEKIASGDLTQHMRVTRRDELGVLQQGIARMGTTLRELIS) folds into the HAMP domain. Over 310–639 (RQITRPLQDT…LQTLVSQFRV (330 aa)) the chain is Cytoplasmic. The Methyl-accepting transducer domain maps to 367–603 (GVTQIASAAE…EISRSILNVR (237 aa)).

This sequence belongs to the methyl-accepting chemotaxis (MCP) protein family. As to quaternary structure, homodimer. Exists as a mixture of monomers and dimers in solution. Ligand binding stabilizes the dimeric form. In terms of processing, methylated by CheR2.

The protein localises to the cell membrane. Binding of citrate to the ligand-binding domain reduces the chemotaxis towards the strong attractants such as malate and succinate. However, in physiologically relevant niches, citrate is mostly complexed with magnesium or calcium ions, and does not bind McpS. Functionally, chemotactic-signal transducers respond to changes in the concentration of attractants and repellents in the environment, transduce a signal from the outside to the inside of the cell, and facilitate sensory adaptation through the variation of the level of methylation. McpS is a specific chemoreceptor for 6 tricarboxylic acid (TCA) cycle intermediates (succinate, fumarate, malate, oxaloacetate, citrate and isocitrate), butyrate and acetate. Malate, succinate, fumarate and oxaloacetate cause the strongest chemotactic response. The protein is Methyl-accepting chemotaxis protein McpS (mcpS) of Pseudomonas putida (strain ATCC 47054 / DSM 6125 / CFBP 8728 / NCIMB 11950 / KT2440).